Here is a 74-residue protein sequence, read N- to C-terminus: WAP four-disulfide core domain protein 18 (74 aa).

The first 24 residues, 1–24 (MKTATVFVLVALIFMTMTTAWALS), serve as a signal peptide directing secretion. The region spanning 26–73 (PKEKPGACPKPPPRSFGTCDERCTGDGSCSGNMKCCSNGCGHACKPPV) is the WAP domain.

It localises to the secreted. In terms of biological role, could have proteinase inhibiting capacity. This is WAP four-disulfide core domain protein 18 (WFDC18) from Bos taurus (Bovine).